The primary structure comprises 436 residues: Cytochrome P450 monooxygenase phqO (436 aa).

Residue Cys377 participates in heme binding.

Belongs to the cytochrome P450 family. Heme serves as cofactor.

The protein operates within alkaloid biosynthesis. Cytochrome P450 monooxygenase; part of the gene cluster that mediates the biosynthesis of paraherquamide, a fungal indole alkaloid that belongs to a family of natural products containing a characteristic bicyclo[2.2.2]diazaoctane core. The first steps in the biosynthesis of paraherquamide is the production of the beta-methyl-proline precursor from L-isoleucine. They require oxidation of a terminally hydroxylated L-isoleucine to the corresponding aldehyde by enzymes which have still to be identified. Spontaneous cyclization and dehydration would yield the 4-methyl pyrolline-5-carboxylic acid, which is then reduced by the pyrroline-5-carboxylate reductase phqD leading to the beta-methyl-proline precursor. The next step of paraherquamide biosynthesis involves coupling of beta-methyl-proline and L-tryptophan by the bimodular NRPS phqB, to produce a monooxopiperazine intermediate. The reductase (R) domain of phqB utilizes NADPH for hydride transfer to reduce the thioester bond of the T domain-tethered linear dipeptide to a hemithioaminal intermediate, which spontaneously cleaves the C-S bond to release the aldehyde product. This compound undergoes spontaneous cyclization and dehydration to give a dienamine which is reverse prenylated at C-2 by the reverse prenyltransferase phqJ. The other prenyltransferase present in the cluster, phqI may be a redundant gene in the pathway. During biosynthetic assembly, the key step to produce the polycyclic core is catalyzed by the bifunctional reductase and intramolecular [4+2] Diels-Alderase, phqE, resulting in formation of the [2.2.2] diazaoctane intermediate preparaherquamide. Following formation of preparaherquamide, an indole 2,3-epoxidation-initiated pinacol-like rearrangement is catalyzed by the phqK FAD-dependent monooxygenase. The prenyltransferase phqA, the cytochrome P450 monooxygenase phqL, and the FAD-linked oxidoreductase phqH (or the cytochrome P450 monooxygenase phqM), are proposed to be involved in the formation of the pyran ring. The FAD-dependent monooxygenase phqK is likely responsible for generation of the spiro-oxindole, and the N-methylation is likely mediated by the phqN methyltransferase leading to the isolable natural product paraherquamide F. However, the order of these biosynthetic steps has still to be determined. In late-stage paraherquamide biosynthesis, the third P450 monooxygenase, phqO, is probably responsible for the C-14 hydroxylation, transforming paraherquamide F to paraherquamide G, and paraherquamide E to the final product paraherquamide A. The expansion from the 6-membered ring pyran (in paraherquamides F and G) to the 7-membered dioxepin ring (in paraherquamides A and E) represents a poorly understood but intriguing process that probably involves the 2-oxoglutarate-dependent dioxygenase phqC. Finally, the remaining members of the paraherquamide cluster, including phqI as well as phqM (or phqH), do not have a clearly prescribed role and appear to be redundant. The chain is Cytochrome P450 monooxygenase phqO from Penicillium fellutanum.